The chain runs to 96 residues: Large ribosomal subunit protein bL28 (96 aa).

Polar residues predominate over residues 1-22 (MSRSCELTGKGVQSGNNVSHAN). The interval 1-24 (MSRSCELTGKGVQSGNNVSHANNK) is disordered.

This sequence belongs to the bacterial ribosomal protein bL28 family.

The polypeptide is Large ribosomal subunit protein bL28 (Sinorhizobium medicae (strain WSM419) (Ensifer medicae)).